The sequence spans 201 residues: Desiccation-related protein PCC3-06 (201 aa).

Residues 41 to 54 show a composition bias toward polar residues; sequence TVASQSQGRQQVSE. Disordered stretches follow at residues 41–155 and 177–201; these read TVAS…QNVK and MGKS…TNYF. Composition is skewed to basic and acidic residues over residues 57–76, 108–144, and 177–193; these read EDAK…KTSE, GELK…ERVA, and MGKS…ETKK.

The protein belongs to the LEA type 1 family.

The sequence is that of Desiccation-related protein PCC3-06 from Craterostigma plantagineum (Blue gem).